Consider the following 225-residue polypeptide: Putative amino-acid transporter YggA (225 aa).

5 helical membrane passes run 1 to 21 (MFAT…PIGA), 37 to 57 (LLTA…GVFG), 65 to 85 (SPIG…WFGI), 116 to 136 (LGVT…LGSF), and 150 to 170 (AVAM…AVVL).

It belongs to the LysE/ArgO transporter (TC 2.A.75) family.

Its subcellular location is the cell membrane. This Aeromonas hydrophila protein is Putative amino-acid transporter YggA.